We begin with the raw amino-acid sequence, 548 residues long: MEEDLFQLRQLPVVKFCRTGESARSEDDTASGEHEVQIEGVRVGLEAVELDDGAAVPKEFANPTDDTFMVEDAVEAIGFGKFQWKLSVLTGLAWMADAMEMMILSILAPQLHCEWRLPSWQVALLTSVVFVGMMSSSTLWGNISDQYGRKTGLKISVLWTLYYGILSAFAPVYSWILVLRGLVGFGIGGVPQSVTLYAEFLPMKARAKCILLIEVFWAIGTVFEVVLAVFVMPSLGWRWLLILSAVPLLLFAVLCFWLPESARYDVLSGNQEKAIATLKRIATENGAPMPLGKLIISRQEDRGKMRDLFTPHFRWTTLLLWFIWFSNAFSYYGLVLLTTELFQAGDVCGISSRKKAVEAKCSLACEYLSEEDYMDLLWTTLSEFPGVLVTLWIIDRLGRKKTMALCFVIFSFCSLLLFICVGRNVLTLLLFIARAFISGGFQAAYVYTPEVYPTATRALGLGTCSGMARVGALITPFIAQVMLESSVYLTLAVYSGCCLLAALASCFLPIETKGRGLQESSHREWGQEMVGRGMHGADVTRSNSGSQE.

The Cytoplasmic segment spans residues 1-87 (MEEDLFQLRQ…GFGKFQWKLS (87 aa)). Ser-25 and Ser-31 each carry phosphoserine. Residues 88–108 (VLTGLAWMADAMEMMILSILA) form a helical membrane-spanning segment. At 109–122 (PQLHCEWRLPSWQV) the chain is on the vesicular side. Residues 123 to 143 (ALLTSVVFVGMMSSSTLWGNI) form a helical membrane-spanning segment. The Cytoplasmic portion of the chain corresponds to 144–156 (SDQYGRKTGLKIS). Residues 157–177 (VLWTLYYGILSAFAPVYSWIL) traverse the membrane as a helical segment. Topologically, residues 178–180 (VLR) are vesicular. A helical transmembrane segment spans residues 181–201 (GLVGFGIGGVPQSVTLYAEFL). Residues 202–209 (PMKARAKC) are Cytoplasmic-facing. Residues 210 to 230 (ILLIEVFWAIGTVFEVVLAVF) traverse the membrane as a helical segment. At 231 to 238 (VMPSLGWR) the chain is on the vesicular side. Residues 239–259 (WLLILSAVPLLLFAVLCFWLP) form a helical membrane-spanning segment. The Cytoplasmic segment spans residues 260-316 (ESARYDVLSGNQEKAIATLKRIATENGAPMPLGKLIISRQEDRGKMRDLFTPHFRWT). A helical transmembrane segment spans residues 317 to 337 (TLLLWFIWFSNAFSYYGLVLL). Residues 338 to 373 (TTELFQAGDVCGISSRKKAVEAKCSLACEYLSEEDY) are Vesicular-facing. A helical membrane pass occupies residues 374–394 (MDLLWTTLSEFPGVLVTLWII). At 395 to 401 (DRLGRKK) the chain is on the cytoplasmic side. A helical membrane pass occupies residues 402 to 422 (TMALCFVIFSFCSLLLFICVG). Over 423–424 (RN) the chain is Vesicular. Residues 425–445 (VLTLLLFIARAFISGGFQAAY) traverse the membrane as a helical segment. The Cytoplasmic portion of the chain corresponds to 446–457 (VYTPEVYPTATR). A helical transmembrane segment spans residues 458 to 478 (ALGLGTCSGMARVGALITPFI). The Vesicular portion of the chain corresponds to 479-489 (AQVMLESSVYL). A helical membrane pass occupies residues 490 to 510 (TLAVYSGCCLLAALASCFLPI). Residues 511 to 548 (ETKGRGLQESSHREWGQEMVGRGMHGADVTRSNSGSQE) are Cytoplasmic-facing. Ser-542 is subject to Phosphoserine.

Belongs to the major facilitator superfamily.

The protein localises to the cytoplasmic vesicle. It is found in the secretory vesicle. The protein resides in the synaptic vesicle membrane. This is Synaptic vesicle 2-related protein (SVOP) from Pongo abelii (Sumatran orangutan).